The sequence spans 147 residues: Cyanate hydratase (147 aa).

Residues R88, E91, and S114 contribute to the active site.

This sequence belongs to the cyanase family.

It catalyses the reaction cyanate + hydrogencarbonate + 3 H(+) = NH4(+) + 2 CO2. In terms of biological role, catalyzes the reaction of cyanate with bicarbonate to produce ammonia and carbon dioxide. This chain is Cyanate hydratase, found in Prochlorococcus marinus subsp. pastoris (strain CCMP1986 / NIES-2087 / MED4).